We begin with the raw amino-acid sequence, 186 residues long: Catechol O-methyltransferase (186 aa).

S-adenosyl-L-methionine contacts are provided by residues valine 7, glutamate 29, serine 37, glutamate 55, leucine 56, 82–85 (GASQ), serine 84, and aspartate 106. Aspartate 106 contacts Mg(2+). Lysine 109 contacts substrate. Mg(2+) contacts are provided by aspartate 134 and asparagine 135. The substrate site is built by asparagine 135 and glutamate 164. Serine 182 carries the phosphoserine modification.

It belongs to the class I-like SAM-binding methyltransferase superfamily. Cation-dependent O-methyltransferase family. Mg(2+) serves as cofactor.

The protein localises to the cytoplasm. The protein resides in the cell membrane. It catalyses the reaction a catechol + S-adenosyl-L-methionine = a guaiacol + S-adenosyl-L-homocysteine + H(+). The enzyme catalyses 2-hydroxyestrone + S-adenosyl-L-methionine = 2-hydroxy-3-methoxy-estrone + S-adenosyl-L-homocysteine + H(+). The catalysed reaction is 4-hydroxyestrone + S-adenosyl-L-methionine = 4-methoxyestrone + S-adenosyl-L-homocysteine + H(+). It carries out the reaction 2-hydroxyestrone + S-adenosyl-L-methionine = 2-methoxyestrone + S-adenosyl-L-homocysteine + H(+). It catalyses the reaction 4-hydroxy-17beta-estradiol + S-adenosyl-L-methionine = 4-methoxy-17beta-estradiol + S-adenosyl-L-homocysteine + H(+). The enzyme catalyses 2-hydroxy-17beta-estradiol + S-adenosyl-L-methionine = 2-hydroxy-3-methoxy-17beta-estradiol + S-adenosyl-L-homocysteine + H(+). The catalysed reaction is 2-hydroxy-17beta-estradiol + S-adenosyl-L-methionine = 2-methoxy-17beta-estradiol + S-adenosyl-L-homocysteine + H(+). Its function is as follows. Catalyzes the O-methylation, and thereby the inactivation, of catecholamine neurotransmitters and catechol hormones. Also shortens the biological half-lives of certain neuroactive drugs, like L-DOPA, alpha-methyl DOPA and isoproterenol. The protein is Catechol O-methyltransferase (COMT) of Sus scrofa (Pig).